A 141-amino-acid polypeptide reads, in one-letter code: Phage-like element PBSX protein XkdS (141 aa).

It to B.subtilis YqbS.

This Bacillus subtilis (strain 168) protein is Phage-like element PBSX protein XkdS (xkdS).